A 112-amino-acid chain; its full sequence is Integration host factor subunit alpha (112 aa).

This sequence belongs to the bacterial histone-like protein family. In terms of assembly, heterodimer of an alpha and a beta chain.

This protein is one of the two subunits of integration host factor, a specific DNA-binding protein that functions in genetic recombination as well as in transcriptional and translational control. In Rhizobium rhizogenes (strain K84 / ATCC BAA-868) (Agrobacterium radiobacter), this protein is Integration host factor subunit alpha.